We begin with the raw amino-acid sequence, 342 residues long: Bifunctional terpene synthase Agr4 (342 aa).

Residues D87, N222, S226, and E230 each coordinate Mg(2+). The DDXXD motif signature appears at 87–91 (DEVSD). R308 and Y309 together coordinate (2E,6E)-farnesyl diphosphate.

This sequence belongs to the terpene synthase family. Requires Mg(2+) as cofactor.

It carries out the reaction (2E,6E)-farnesyl diphosphate = delta-cadinene + diphosphate. The catalysed reaction is (2E,6E)-farnesyl diphosphate = gamma-muurolene + diphosphate. The enzyme catalyses (2E,6E)-farnesyl diphosphate = beta-copaene + diphosphate. It catalyses the reaction (2E)-geranyl diphosphate = beta-myrcene + diphosphate. Functionally, terpene cyclase that catalyzes the cyclization of farnesyl diphosphate (FPP) to various sesquiterpenes, including beta-copaene, alpha-cubebene, cadina-1(6),4-diene, gamma-muurolene, delta-cadinene, epizonarene, epicubenol and cubenol. Agr4 is also able to use the monoterpene precursor geranyl diphosphate (GPP) as substrates to synthesize the monoterpene beta-myrcene. Delta-cadinene is the major product of Agr4. The sequence is that of Bifunctional terpene synthase Agr4 from Cyclocybe aegerita (Black poplar mushroom).